The following is a 424-amino-acid chain: Serine--tRNA ligase (424 aa).

Position 231 to 233 (231 to 233) interacts with L-serine; sequence TAE. 262–264 contributes to the ATP binding site; sequence RSE. Glutamate 285 is an L-serine binding site. Position 349 to 352 (349 to 352) interacts with ATP; the sequence is EISS. Residue serine 385 coordinates L-serine.

Belongs to the class-II aminoacyl-tRNA synthetase family. Type-1 seryl-tRNA synthetase subfamily. Homodimer. The tRNA molecule binds across the dimer.

It localises to the cytoplasm. It catalyses the reaction tRNA(Ser) + L-serine + ATP = L-seryl-tRNA(Ser) + AMP + diphosphate + H(+). The enzyme catalyses tRNA(Sec) + L-serine + ATP = L-seryl-tRNA(Sec) + AMP + diphosphate + H(+). It functions in the pathway aminoacyl-tRNA biosynthesis; selenocysteinyl-tRNA(Sec) biosynthesis; L-seryl-tRNA(Sec) from L-serine and tRNA(Sec): step 1/1. Functionally, catalyzes the attachment of serine to tRNA(Ser). Is also able to aminoacylate tRNA(Sec) with serine, to form the misacylated tRNA L-seryl-tRNA(Sec), which will be further converted into selenocysteinyl-tRNA(Sec). The polypeptide is Serine--tRNA ligase (Bacillus cereus (strain ZK / E33L)).